A 204-amino-acid chain; its full sequence is Imidazoleglycerol-phosphate dehydratase (204 aa).

This sequence belongs to the imidazoleglycerol-phosphate dehydratase family.

The protein localises to the cytoplasm. The catalysed reaction is D-erythro-1-(imidazol-4-yl)glycerol 3-phosphate = 3-(imidazol-4-yl)-2-oxopropyl phosphate + H2O. The protein operates within amino-acid biosynthesis; L-histidine biosynthesis; L-histidine from 5-phospho-alpha-D-ribose 1-diphosphate: step 6/9. This is Imidazoleglycerol-phosphate dehydratase from Rhodococcus jostii (strain RHA1).